A 284-amino-acid chain; its full sequence is Exosome complex component MTR3 (284 aa).

The protein belongs to the RNase PH family. In terms of assembly, component of the RNA exosome complex.

The protein resides in the cytoplasm. The protein localises to the nucleus. It localises to the nucleolus. Non-catalytic component of the RNA exosome complex which has 3'-&gt;5' exoribonuclease activity and participates in a multitude of cellular RNA processing and degradation events. The sequence is that of Exosome complex component MTR3 (MTR3) from Chaetomium thermophilum (strain DSM 1495 / CBS 144.50 / IMI 039719) (Thermochaetoides thermophila).